The chain runs to 300 residues: GTPase Era (300 aa).

The Era-type G domain maps to 4 to 173 (KYGIVAIVGK…INTIKQYLHK (170 aa)). Residues 12 to 19 (GKPNVGKS) are G1. 12 to 19 (GKPNVGKS) is a GTP binding site. The segment at 38–42 (QTTRN) is G2. The interval 59 to 62 (DTPG) is G3. GTP is bound by residues 59 to 63 (DTPGF) and 122 to 125 (SKAE). The segment at 122–125 (SKAE) is G4. Residues 152 to 154 (ISA) form a G5 region. A KH type-2 domain is found at 204 to 282 (LNHEVPHGVG…SLTIFVKVEN (79 aa)).

The protein belongs to the TRAFAC class TrmE-Era-EngA-EngB-Septin-like GTPase superfamily. Era GTPase family. Monomer.

Its subcellular location is the cytoplasm. It is found in the cell membrane. Functionally, an essential GTPase that binds both GDP and GTP, with rapid nucleotide exchange. Plays a role in 16S rRNA processing and 30S ribosomal subunit biogenesis and possibly also in cell cycle regulation and energy metabolism. The sequence is that of GTPase Era from Ureaplasma urealyticum serovar 10 (strain ATCC 33699 / Western).